A 407-amino-acid polypeptide reads, in one-letter code: Deacetylase Atu3266 (407 aa).

Zn(2+) is bound by residues His-75, His-77, Lys-173, His-206, His-229, and Asp-289. Lys-173 carries the post-translational modification N6-carboxylysine.

The protein belongs to the metallo-dependent hydrolases superfamily. Atu3266/EF_0837 deacetylase family. As to quaternary structure, homohexamer, dimer of trimers. It depends on Zn(2+) as a cofactor.

Its function is as follows. Esterase that catalyzes the deacetylation of acetyl-(R)-mandelate (in vitro). Can also hydrolyze acetyl glycolate, but with lower efficiency. Has very low N-acetyl-D-amino acid deacetylase activity with N-acetyl-D-serine and N-acetyl-D-threonine (in vitro). Theoretical substrate docking studies suggest that other N-acetylated amino acids may optimally occupy the active site and may in fact be the physiological substrates. This is Deacetylase Atu3266 from Agrobacterium fabrum (strain C58 / ATCC 33970) (Agrobacterium tumefaciens (strain C58)).